Here is a 393-residue protein sequence, read N- to C-terminus: Digeranylgeranylglycerophospholipid reductase (393 aa).

Residues Ala13, Asp32, Cys43, Ala44, Gly46, Arg95, Val119, Asp274, and Gly286 each coordinate FAD. 2 residues coordinate a 2,3-bis-O-(geranylgeranyl)-sn-glycerol 1-phospholipid: Arg327 and Gly363.

This sequence belongs to the geranylgeranyl reductase family. DGGGPL reductase subfamily. Requires FAD as cofactor.

It carries out the reaction a 2,3-bis-O-phytanyl-sn-glycerol 1-phospholipid + 8 A = a 2,3-bis-O-(geranylgeranyl)-sn-glycerol 1-phospholipid + 8 AH2. It catalyses the reaction 2,3-bis-O-(phytanyl)-sn-glycerol 1-phosphate + 8 A = 2,3-bis-O-(geranylgeranyl)-sn-glycerol 1-phosphate + 8 AH2. The enzyme catalyses CDP-2,3-bis-O-(geranylgeranyl)-sn-glycerol + 8 AH2 = CDP-2,3-bis-O-(phytanyl)-sn-glycerol + 8 A. The catalysed reaction is archaetidylserine + 8 AH2 = 2,3-bis-O-phytanyl-sn-glycero-3-phospho-L-serine + 8 A. Its pathway is membrane lipid metabolism; glycerophospholipid metabolism. In terms of biological role, is involved in the reduction of 2,3-digeranylgeranylglycerophospholipids (unsaturated archaeols) into 2,3-diphytanylglycerophospholipids (saturated archaeols) in the biosynthesis of archaeal membrane lipids. Catalyzes the formation of archaetidic acid (2,3-di-O-phytanyl-sn-glyceryl phosphate) from 2,3-di-O-geranylgeranylglyceryl phosphate (DGGGP) via the hydrogenation of each double bond of the isoprenoid chains. Is also probably able to reduce double bonds of geranyl groups in CDP-2,3-bis-O-(geranylgeranyl)-sn-glycerol and archaetidylserine, thus acting at various stages in the biosynthesis of archaeal membrane lipids. This chain is Digeranylgeranylglycerophospholipid reductase, found in Pyrococcus horikoshii (strain ATCC 700860 / DSM 12428 / JCM 9974 / NBRC 100139 / OT-3).